The sequence spans 195 residues: UPF0301 protein Bpro_1142 (195 aa).

It belongs to the UPF0301 (AlgH) family.

The sequence is that of UPF0301 protein Bpro_1142 from Polaromonas sp. (strain JS666 / ATCC BAA-500).